Consider the following 204-residue polypeptide: CASP-like protein 1B2 (204 aa).

Topologically, residues 1 to 28 (MASKGEEKPELVGSKQGIVSVTKAKHDQ) are cytoplasmic. The chain crosses the membrane as a helical span at residues 29–49 (IVLVLRVVAFLATASATIVMG). Topologically, residues 50–80 (LNQETKTLLVGTIGTTPIRATLKAKFQHTPA) are extracellular. The chain crosses the membrane as a helical span at residues 81 to 101 (FVFFVVANGLASVYNLVMLGV). The Cytoplasmic portion of the chain corresponds to 102-114 (DVFGRKLDCKGLR). Residues 115–135 (LVIISILDMVIVAVVAAGASS) traverse the membrane as a helical segment. Residues 136–168 (AAFMAELGKNGNSHAKWNKICDKFESFCHQGGG) lie on the Extracellular side of the membrane. The helical transmembrane segment at 169 to 189 (ALIPSFIALLLLFLISAISII) threads the bilayer. Over 190–204 (TLHNQKLTSPHATTP) the chain is Cytoplasmic.

It belongs to the Casparian strip membrane proteins (CASP) family. Homodimer and heterodimers.

The protein resides in the cell membrane. This Vitis vinifera (Grape) protein is CASP-like protein 1B2.